The sequence spans 133 residues: DNA-directed RNA polymerase subunit omega (133 aa).

This sequence belongs to the RNA polymerase subunit omega family. The RNAP catalytic core consists of 2 alpha, 1 beta, 1 beta' and 1 omega subunit. When a sigma factor is associated with the core the holoenzyme is formed, which can initiate transcription.

It catalyses the reaction RNA(n) + a ribonucleoside 5'-triphosphate = RNA(n+1) + diphosphate. Promotes RNA polymerase assembly. Latches the N- and C-terminal regions of the beta' subunit thereby facilitating its interaction with the beta and alpha subunits. The protein is DNA-directed RNA polymerase subunit omega of Brucella canis (strain ATCC 23365 / NCTC 10854 / RM-666).